We begin with the raw amino-acid sequence, 111 residues long: ATP-dependent Clp protease adapter protein ClpS (111 aa).

It belongs to the ClpS family. In terms of assembly, binds to the N-terminal domain of the chaperone ClpA.

Involved in the modulation of the specificity of the ClpAP-mediated ATP-dependent protein degradation. The polypeptide is ATP-dependent Clp protease adapter protein ClpS (Legionella pneumophila (strain Paris)).